The primary structure comprises 195 residues: Phosphoheptose isomerase (195 aa).

In terms of domain architecture, SIS spans I37–Q195. Residue N52 to G54 coordinates substrate. Positions 61 and 65 each coordinate Zn(2+). Residues E65, N93–D94, S119–S121, S124, and Q172 each bind substrate. The Zn(2+) site is built by Q172 and H180.

Belongs to the SIS family. GmhA subfamily. As to quaternary structure, homotetramer. Requires Zn(2+) as cofactor.

The protein resides in the cytoplasm. The catalysed reaction is 2 D-sedoheptulose 7-phosphate = D-glycero-alpha-D-manno-heptose 7-phosphate + D-glycero-beta-D-manno-heptose 7-phosphate. The protein operates within carbohydrate biosynthesis; D-glycero-D-manno-heptose 7-phosphate biosynthesis; D-glycero-alpha-D-manno-heptose 7-phosphate and D-glycero-beta-D-manno-heptose 7-phosphate from sedoheptulose 7-phosphate: step 1/1. In terms of biological role, catalyzes the isomerization of sedoheptulose 7-phosphate in D-glycero-D-manno-heptose 7-phosphate. The chain is Phosphoheptose isomerase from Histophilus somni (strain 2336) (Haemophilus somnus).